The chain runs to 209 residues: Ribosomal RNA large subunit methyltransferase E (209 aa).

Residues G63, W65, D83, D99, and D124 each coordinate S-adenosyl-L-methionine. K164 serves as the catalytic Proton acceptor.

This sequence belongs to the class I-like SAM-binding methyltransferase superfamily. RNA methyltransferase RlmE family.

It is found in the cytoplasm. It carries out the reaction uridine(2552) in 23S rRNA + S-adenosyl-L-methionine = 2'-O-methyluridine(2552) in 23S rRNA + S-adenosyl-L-homocysteine + H(+). Functionally, specifically methylates the uridine in position 2552 of 23S rRNA at the 2'-O position of the ribose in the fully assembled 50S ribosomal subunit. The chain is Ribosomal RNA large subunit methyltransferase E from Buchnera aphidicola subsp. Cinara cedri (strain Cc).